The primary structure comprises 130 residues: Ribonuclease P protein component (130 aa).

Belongs to the RnpA family. In terms of assembly, consists of a catalytic RNA component (M1 or rnpB) and a protein subunit.

The enzyme catalyses Endonucleolytic cleavage of RNA, removing 5'-extranucleotides from tRNA precursor.. In terms of biological role, RNaseP catalyzes the removal of the 5'-leader sequence from pre-tRNA to produce the mature 5'-terminus. It can also cleave other RNA substrates such as 4.5S RNA. The protein component plays an auxiliary but essential role in vivo by binding to the 5'-leader sequence and broadening the substrate specificity of the ribozyme. The chain is Ribonuclease P protein component from Psychrobacter sp. (strain PRwf-1).